A 233-amino-acid chain; its full sequence is Counting factor-associated protein A (233 aa).

An N-terminal signal peptide occupies residues 1–21 (MKLLNSLILLVLTCLVSSINT). Asn37 and Asn189 each carry an N-linked (GlcNAc...) asparagine glycan.

It is found in the secreted. The sequence is that of Counting factor-associated protein A (cfaA) from Dictyostelium discoideum (Social amoeba).